The primary structure comprises 515 residues: AAA ATPase forming ring-shaped complexes (515 aa).

A coiled-coil region spans residues 2–49 (NDHDEETLASLQQANDQLMAKNHALVKALSRATQEMTKTKAQLNQLAG). Position 240–245 (240–245 (GNGKTL)) interacts with ATP.

The protein belongs to the AAA ATPase family. Homohexamer. Assembles into a hexameric ring structure.

In Bifidobacterium adolescentis (strain ATCC 15703 / DSM 20083 / NCTC 11814 / E194a), this protein is AAA ATPase forming ring-shaped complexes.